The following is a 309-amino-acid chain: Ribosomal RNA small subunit methyltransferase H (309 aa).

Residues 36–38 (AGH), aspartate 55, phenylalanine 81, aspartate 102, and glutamine 109 contribute to the S-adenosyl-L-methionine site.

This sequence belongs to the methyltransferase superfamily. RsmH family.

The protein resides in the cytoplasm. The catalysed reaction is cytidine(1402) in 16S rRNA + S-adenosyl-L-methionine = N(4)-methylcytidine(1402) in 16S rRNA + S-adenosyl-L-homocysteine + H(+). In terms of biological role, specifically methylates the N4 position of cytidine in position 1402 (C1402) of 16S rRNA. This is Ribosomal RNA small subunit methyltransferase H from Mycoplasma genitalium (strain ATCC 33530 / DSM 19775 / NCTC 10195 / G37) (Mycoplasmoides genitalium).